The following is a 162-amino-acid chain: UPF0460 protein y4xD (162 aa).

The protein belongs to the UPF0460 family.

The chain is UPF0460 protein y4xD from Sinorhizobium fredii (strain NBRC 101917 / NGR234).